The chain runs to 579 residues: Isocitrate dehydrogenase kinase/phosphatase (579 aa).

Residues 324-330 (ADGTPGM) and Lys-345 each bind ATP. Asp-380 is an active-site residue.

The protein belongs to the AceK family.

The protein localises to the cytoplasm. It catalyses the reaction L-seryl-[isocitrate dehydrogenase] + ATP = O-phospho-L-seryl-[isocitrate dehydrogenase] + ADP + H(+). Bifunctional enzyme which can phosphorylate or dephosphorylate isocitrate dehydrogenase (IDH) on a specific serine residue. This is a regulatory mechanism which enables bacteria to bypass the Krebs cycle via the glyoxylate shunt in response to the source of carbon. When bacteria are grown on glucose, IDH is fully active and unphosphorylated, but when grown on acetate or ethanol, the activity of IDH declines drastically concomitant with its phosphorylation. The protein is Isocitrate dehydrogenase kinase/phosphatase of Xanthomonas campestris pv. campestris (strain 8004).